Here is a 487-residue protein sequence, read N- to C-terminus: MAEVTNCAAIVLAAGAGTRMKSSTQKTLHEIGGRSLLGHALHAAAGLNPEHLVVVVGHQRDQVSPAVDAISEELDCAVSQAVQEEQNGTGHAVQCGLSALPEFDGTVIVTNGDVPLLRPETLRQLHEAHTGEANAVTVLSMTLEDPTGYGRVLRADDGSVTAIVEQKDASEEQRKVREVNSGVFAFDGAVLRDALTKLNSDNAQGELYITDVLEIAREAGHRVGAHVAADPEELSGVNDRVQLAAAGRLLNRRMVEEAMRGGTTIVDPDTTWIGVNVTIGQDVVIHPNTQLWGATTIADGAEVGPDTTLTNIQVGAGASVVRTHGFDSVIGSNAQIGPFTYIRPGVIVGEEGKLGGFVEAKKTQIGRGTKVPHLTYIGDATVGDYSNIGASSVFVNYDGVNKHHTTIGSHVRTGSDTMFIAPVTVGDGAYSGAGTVIKDDVPPGALAVSGGKQRNIEGWVQKKRPGTPAAEAAGKAQDAKANDQTTN.

The segment at 1–240 is pyrophosphorylase; it reads MAEVTNCAAI…PEELSGVNDR (240 aa). UDP-N-acetyl-alpha-D-glucosamine-binding positions include 12-15, Lys-26, Gln-83, and 88-89; these read LAAG and GT. Residue Asp-113 coordinates Mg(2+). UDP-N-acetyl-alpha-D-glucosamine is bound by residues Gly-150, Glu-165, Asn-180, and Asn-238. Asn-238 is a Mg(2+) binding site. A linker region spans residues 241-261; it reads VQLAAAGRLLNRRMVEEAMRG. Residues 262–487 form an N-acetyltransferase region; that stretch reads GTTIVDPDTT…DAKANDQTTN (226 aa). Arg-343 and Lys-361 together coordinate UDP-N-acetyl-alpha-D-glucosamine. His-373 serves as the catalytic Proton acceptor. Tyr-376 and Asn-387 together coordinate UDP-N-acetyl-alpha-D-glucosamine. Acetyl-CoA is bound by residues Ala-390, 396–397, Ser-415, and Ala-433; that span reads NY. Residues 449 to 487 are disordered; the sequence is SGGKQRNIEGWVQKKRPGTPAAEAAGKAQDAKANDQTTN.

This sequence in the N-terminal section; belongs to the N-acetylglucosamine-1-phosphate uridyltransferase family. In the C-terminal section; belongs to the transferase hexapeptide repeat family. Homotrimer. The cofactor is Mg(2+).

Its subcellular location is the cytoplasm. The enzyme catalyses alpha-D-glucosamine 1-phosphate + acetyl-CoA = N-acetyl-alpha-D-glucosamine 1-phosphate + CoA + H(+). It carries out the reaction N-acetyl-alpha-D-glucosamine 1-phosphate + UTP + H(+) = UDP-N-acetyl-alpha-D-glucosamine + diphosphate. Its pathway is nucleotide-sugar biosynthesis; UDP-N-acetyl-alpha-D-glucosamine biosynthesis; N-acetyl-alpha-D-glucosamine 1-phosphate from alpha-D-glucosamine 6-phosphate (route II): step 2/2. It functions in the pathway nucleotide-sugar biosynthesis; UDP-N-acetyl-alpha-D-glucosamine biosynthesis; UDP-N-acetyl-alpha-D-glucosamine from N-acetyl-alpha-D-glucosamine 1-phosphate: step 1/1. It participates in bacterial outer membrane biogenesis; LPS lipid A biosynthesis. Its function is as follows. Catalyzes the last two sequential reactions in the de novo biosynthetic pathway for UDP-N-acetylglucosamine (UDP-GlcNAc). The C-terminal domain catalyzes the transfer of acetyl group from acetyl coenzyme A to glucosamine-1-phosphate (GlcN-1-P) to produce N-acetylglucosamine-1-phosphate (GlcNAc-1-P), which is converted into UDP-GlcNAc by the transfer of uridine 5-monophosphate (from uridine 5-triphosphate), a reaction catalyzed by the N-terminal domain. In Corynebacterium aurimucosum (strain ATCC 700975 / DSM 44827 / CIP 107346 / CN-1) (Corynebacterium nigricans), this protein is Bifunctional protein GlmU.